Reading from the N-terminus, the 35-residue chain is Photosystem II reaction center protein M (35 aa).

Residues 7-27 traverse the membrane as a helical segment; it reads GFIASILFVLVPTVFLLILFI.

This sequence belongs to the PsbM family. PSII is composed of 1 copy each of membrane proteins PsbA, PsbB, PsbC, PsbD, PsbE, PsbF, PsbH, PsbI, PsbJ, PsbK, PsbL, PsbM, PsbT, PsbX, PsbY, PsbZ, Psb30/Ycf12, peripheral proteins PsbO, CyanoQ (PsbQ), PsbU, PsbV and a large number of cofactors. It forms dimeric complexes.

It localises to the cellular thylakoid membrane. In terms of biological role, one of the components of the core complex of photosystem II (PSII). PSII is a light-driven water:plastoquinone oxidoreductase that uses light energy to abstract electrons from H(2)O, generating O(2) and a proton gradient subsequently used for ATP formation. It consists of a core antenna complex that captures photons, and an electron transfer chain that converts photonic excitation into a charge separation. This subunit is found at the monomer-monomer interface. This chain is Photosystem II reaction center protein M, found in Microcystis aeruginosa (strain NIES-843 / IAM M-2473).